Consider the following 251-residue polypeptide: Triosephosphate isomerase (251 aa).

9 to 11 lines the substrate pocket; sequence NWK. The Electrophile role is filled by histidine 95. Glutamate 167 acts as the Proton acceptor in catalysis. Substrate is bound by residues glycine 173, serine 212, and 233 to 234; that span reads GG.

Belongs to the triosephosphate isomerase family. In terms of assembly, homodimer.

It is found in the cytoplasm. It catalyses the reaction D-glyceraldehyde 3-phosphate = dihydroxyacetone phosphate. Its pathway is carbohydrate biosynthesis; gluconeogenesis. It functions in the pathway carbohydrate degradation; glycolysis; D-glyceraldehyde 3-phosphate from glycerone phosphate: step 1/1. Its function is as follows. Involved in the gluconeogenesis. Catalyzes stereospecifically the conversion of dihydroxyacetone phosphate (DHAP) to D-glyceraldehyde-3-phosphate (G3P). The chain is Triosephosphate isomerase from Pseudomonas aeruginosa (strain LESB58).